Here is a 585-residue protein sequence, read N- to C-terminus: Chaperonin CPN60-like 1, mitochondrial (585 aa).

The N-terminal 32 residues, 1-32 (MYRLVSNVASKARIARKCTSQIGSRLNSTRNY), are a transit peptide targeting the mitochondrion.

It belongs to the chaperonin (HSP60) family.

Its subcellular location is the mitochondrion. In terms of biological role, implicated in mitochondrial protein import and macromolecular assembly. May facilitate the correct folding of imported proteins. May also prevent misfolding and promote the refolding and proper assembly of unfolded polypeptides generated under stress conditions in the mitochondrial matrix. The polypeptide is Chaperonin CPN60-like 1, mitochondrial (Arabidopsis thaliana (Mouse-ear cress)).